The primary structure comprises 251 residues: 3-deoxy-manno-octulosonate cytidylyltransferase (251 aa).

The protein belongs to the KdsB family.

The protein resides in the cytoplasm. It catalyses the reaction 3-deoxy-alpha-D-manno-oct-2-ulosonate + CTP = CMP-3-deoxy-beta-D-manno-octulosonate + diphosphate. It participates in nucleotide-sugar biosynthesis; CMP-3-deoxy-D-manno-octulosonate biosynthesis; CMP-3-deoxy-D-manno-octulosonate from 3-deoxy-D-manno-octulosonate and CTP: step 1/1. Its pathway is bacterial outer membrane biogenesis; lipopolysaccharide biosynthesis. Activates KDO (a required 8-carbon sugar) for incorporation into bacterial lipopolysaccharide in Gram-negative bacteria. The chain is 3-deoxy-manno-octulosonate cytidylyltransferase from Rhizobium etli (strain ATCC 51251 / DSM 11541 / JCM 21823 / NBRC 15573 / CFN 42).